The following is a 2611-amino-acid chain: Highly reducing polyketide synthase ATEG_07659 (2611 aa).

The 400-residue stretch at 10–409 (SEPIAIIGLS…GTNSHVIVEG (400 aa)) folds into the Ketosynthase family 3 (KS3) domain. Active-site for beta-ketoacyl synthase activity residues include Cys157, His292, and His330. The tract at residues 537–844 (MVFTGQGAQW…VRFVEAFTDM (308 aa)) is malonyl-CoA:ACP transacylase (MAT) domain. The tract at residues 969–1109 (HDLLGVLVPG…GLITVQMAAD (141 aa)) is N-terminal hotdog fold. The PKS/mFAS DH domain maps to 969 to 1292 (HDLLGVLVPG…CQSLGRSAPG (324 aa)). A dehydratase (DH) domain region spans residues 970–1289 (DLLGVLVPGT…GLVCQSLGRS (320 aa)). Residue His1001 is the Proton acceptor; for dehydratase activity of the active site. The C-terminal hotdog fold stretch occupies residues 1128-1292 (GYTRRIDPQD…CQSLGRSAPG (165 aa)). Residue Asp1199 is the Proton donor; for dehydratase activity of the active site. The interval 1469-1602 (FGQLKSLLAA…GATLLLMETT (134 aa)) is methyltransferase (CMet) domain. The enoyl reductase (ER) domain stretch occupies residues 1898-2213 (GLLDTLAFGD…TGKHLGKLVL (316 aa)). The segment at 2236–2416 (ASYLLVGGVG…AVSLDMGVIK (181 aa)) is ketoreductase (KR) domain. Positions 2499–2509 (SRAQAQQAGGD) are enriched in low complexity. The tract at residues 2499-2520 (SRAQAQQAGGDSDSEPLSAKLR) is disordered. The Carrier domain maps to 2527–2604 (AAARCVGDAI…ALALDVVAKS (78 aa)). An O-(pantetheine 4'-phosphoryl)serine modification is found at Ser2564.

It functions in the pathway secondary metabolite biosynthesis. Functionally, highly reducing polyketide synthase; part of the cluster B that mediates the biosynthesis of azasperpyranones, members of the azaphilone family that exhibit anti-cancer activities. Azasperpyranones are synthesized by 2 clusters, A and B. Cluster A is responsible for the production of the polyhydric phenol moiety while the azaphilonoid scaffold is produced by the cluster B. The non-reducing polyketide synthase ATEG_03629 produces 5-methyl orsellinic acid, which is then reduced to 5-methyl orsellinic aldehyde by the NRPS-like protein ATEG_03630. 5-methyl orsellinic aldehyde is then first hydroxylated by the FAD-dependent monooxygenase ATEG_03635 and subsequently hydroxylated by the cytochrome P450 monooxygenase ATEG_03631 to produce the unstable polyhydric phenol precursor of azasperpyranones. On the other hand, the polyketide synthase ATEG_07659 is responsible for producing the 3,5-dimethyloctadienone moiety from acetyl-CoA, three malonyl-CoA, and two S-adenosyl methionines (SAM). The 3,5-dimethyloctadienone moiety is then loaded onto the SAT domain of ATEG_07661 and extended with four malonyl-CoA and one SAM, which leads to the formation of 2,4-dihydroxy-6-(5,7-dimethyl-2-oxo-trans-3-trans-5-nonadienyl)-3-methylbenzaldehyde (compound 8) after reductive release and aldol condensation. The FAD-dependent monooxygenase ATEG_07662 is the next enzyme in the biosynthesis sequence and hydroxylates the side chain at the benzylic position of compound 8. In Aspergillus nidulans, afoF, the ortholog of the FAD-dependent oxygenase ATEG_07660, is the key enzyme for the biosynthesis of asperfuranone by catalyzing the hydroxylation at C-8 of to prevent the formation of a six-membered ring hemiacetal intermediate and thus facilitating the formation of a five-membered ring to produce asperfuranone. In Aspergillus terreus, ATEG_07660 is probably not functional, which leads to the formation of the six-membered ring hemiacetal intermediate presperpyranone instead of asperfuranone. Finally, ATEG_03636 is involved in the condensation of the polyhydric phenol moiety produced by cluster A and the perasperpyranone precursor produced by cluster B, to yield azasperpyranone A. Further modifications of azasperpyranone A result in the production of derivatives, including azasperpyranone B to F. The sequence is that of Highly reducing polyketide synthase ATEG_07659 from Aspergillus terreus (strain NIH 2624 / FGSC A1156).